The following is a 35-amino-acid chain: Sperm protamine alpha isoform 2 (35 aa).

The segment at 1 to 35 is disordered; that stretch reads MPRRRRRASRPIRRRRRARRSTAVRRRRRVVRRRR. Phosphoserine is present on residues S9 and S21.

Phosphorylated in immature sperm. Dephosphorylated in mature sperm allowing a stronger interaction with DNA. As to expression, gonads.

Its subcellular location is the nucleus. It localises to the chromosome. Its function is as follows. Protamines substitute for histones in the chromatin of sperm during the haploid phase of spermatogenesis. They compact sperm DNA into a highly condensed, stable and inactive complex. This is Sperm protamine alpha isoform 2 from Scomber scombrus (Atlantic mackerel).